We begin with the raw amino-acid sequence, 256 residues long: Imidazole glycerol phosphate synthase subunit HisF (256 aa).

Residues D12 and D131 contribute to the active site.

This sequence belongs to the HisA/HisF family. Heterodimer of HisH and HisF.

The protein resides in the cytoplasm. It carries out the reaction 5-[(5-phospho-1-deoxy-D-ribulos-1-ylimino)methylamino]-1-(5-phospho-beta-D-ribosyl)imidazole-4-carboxamide + L-glutamine = D-erythro-1-(imidazol-4-yl)glycerol 3-phosphate + 5-amino-1-(5-phospho-beta-D-ribosyl)imidazole-4-carboxamide + L-glutamate + H(+). It participates in amino-acid biosynthesis; L-histidine biosynthesis; L-histidine from 5-phospho-alpha-D-ribose 1-diphosphate: step 5/9. In terms of biological role, IGPS catalyzes the conversion of PRFAR and glutamine to IGP, AICAR and glutamate. The HisF subunit catalyzes the cyclization activity that produces IGP and AICAR from PRFAR using the ammonia provided by the HisH subunit. The polypeptide is Imidazole glycerol phosphate synthase subunit HisF (Stutzerimonas stutzeri (strain A1501) (Pseudomonas stutzeri)).